The chain runs to 100 residues: NADH-quinone oxidoreductase subunit K 1 (100 aa).

3 helical membrane passes run 3 to 23 (IIKA…LGVI), 28 to 48 (LITV…ALVA), and 60 to 80 (IFAF…LGLI).

This sequence belongs to the complex I subunit 4L family. In terms of assembly, NDH-1 is composed of 14 different subunits. Subunits NuoA, H, J, K, L, M, N constitute the membrane sector of the complex.

Its subcellular location is the cell inner membrane. The catalysed reaction is a quinone + NADH + 5 H(+)(in) = a quinol + NAD(+) + 4 H(+)(out). Its function is as follows. NDH-1 shuttles electrons from NADH, via FMN and iron-sulfur (Fe-S) centers, to quinones in the respiratory chain. The immediate electron acceptor for the enzyme in this species is believed to be ubiquinone. Couples the redox reaction to proton translocation (for every two electrons transferred, four hydrogen ions are translocated across the cytoplasmic membrane), and thus conserves the redox energy in a proton gradient. The sequence is that of NADH-quinone oxidoreductase subunit K 1 from Aquifex aeolicus (strain VF5).